A 214-amino-acid polypeptide reads, in one-letter code: Reticulon-3-A (214 aa).

The segment at Met-1 to Gly-21 is disordered. The region spanning Val-26 to Glu-214 is the Reticulon domain. A run of 2 helical transmembrane segments spans residues Met-46–Leu-66 and Val-155–Val-175.

As to quaternary structure, homodimer. Expressed in the animal hemisphere at the four-cell stage. During gastrulation, expression becomes restricted to the prospective neuroectoderm. At the early tail bud stage, expressed in the head structure. At the tadpole stage, expressed in head and neural tissues including the otic vesicle and optic nerve.

Its subcellular location is the endoplasmic reticulum membrane. The protein localises to the golgi apparatus membrane. Functionally, may be involved in membrane trafficking in the early secretory pathway. The sequence is that of Reticulon-3-A (rtn3-a) from Xenopus laevis (African clawed frog).